We begin with the raw amino-acid sequence, 156 residues long: Small ribosomal subunit protein uS7 (156 aa).

It belongs to the universal ribosomal protein uS7 family. In terms of assembly, part of the 30S ribosomal subunit. Contacts proteins S9 and S11.

In terms of biological role, one of the primary rRNA binding proteins, it binds directly to 16S rRNA where it nucleates assembly of the head domain of the 30S subunit. Is located at the subunit interface close to the decoding center, probably blocks exit of the E-site tRNA. In Acinetobacter baylyi (strain ATCC 33305 / BD413 / ADP1), this protein is Small ribosomal subunit protein uS7.